We begin with the raw amino-acid sequence, 253 residues long: MNFAIETVNLNVYYGQNHVIKDVDLKIPNKGVFALMGPSGCGKSTMLRTFNRLIELNEDARVEGEVRLFGENIYSEDVDPIEVRKKVGMVFQYPNPFPHLTIYDNVAIGLKLNGLVKSREELDERVEWALKKAALWDEVKDRLNDYPGNLSGGQRQRLVIARALAMKPEVLLMDEPTANIDPVGTAKIEELLLELKEDYTIVLVTHSPAQAARVADYVAFLYLGELIEVGPARKVFENPEHELTEKYVTGALG.

Residues 5-248 form the ABC transporter domain; sequence IETVNLNVYY…PEHELTEKYV (244 aa). An ATP-binding site is contributed by 37-44; it reads GPSGCGKS.

Belongs to the ABC transporter superfamily. Phosphate importer (TC 3.A.1.7) family. The complex is composed of two ATP-binding proteins (PstB), two transmembrane proteins (PstC and PstA) and a solute-binding protein (PstS).

The protein resides in the cell membrane. The catalysed reaction is phosphate(out) + ATP + H2O = ADP + 2 phosphate(in) + H(+). In terms of biological role, part of the ABC transporter complex PstSACB involved in phosphate import. Responsible for energy coupling to the transport system. The protein is Phosphate import ATP-binding protein PstB of Thermococcus kodakarensis (strain ATCC BAA-918 / JCM 12380 / KOD1) (Pyrococcus kodakaraensis (strain KOD1)).